Here is a 466-residue protein sequence, read N- to C-terminus: Ras-GEF domain-containing family member 1C (466 aa).

2 disordered regions span residues 1–35 (MPRT…PLLD) and 443–466 (SESP…LGKT). Residues 34–164 (LDGAPSSASL…LLQTLHQKLA (131 aa)) enclose the N-terminal Ras-GEF domain. Positions 200–446 (DPYTLAQQLT…YLASYESESP (247 aa)) constitute a Ras-GEF domain.

Functionally, guanine nucleotide exchange factor (GEF). This is Ras-GEF domain-containing family member 1C (Rasgef1c) from Mus musculus (Mouse).